The primary structure comprises 101 residues: Small ribosomal subunit protein uS14 (101 aa).

This sequence belongs to the universal ribosomal protein uS14 family. Part of the 30S ribosomal subunit. Contacts proteins S3 and S10.

Functionally, binds 16S rRNA, required for the assembly of 30S particles and may also be responsible for determining the conformation of the 16S rRNA at the A site. This Buchnera aphidicola subsp. Baizongia pistaciae (strain Bp) protein is Small ribosomal subunit protein uS14.